The chain runs to 156 residues: Endogenous retrovirus group K member 18 Pro protein (156 aa).

The region spanning 21–96 is the Peptidase A2 domain; that stretch reads LEGLVDTGAD…IPLNLWGRDL (76 aa). Residue D26 is part of the active site. The region spanning 111–156 is the G-patch domain; it reads YSPMSQKIMTKMGYIPGKGLGKNEDGIKVPIEAKINHGREGTGYPF.

It belongs to the peptidase A2 family. HERV class-II K(HML-2) subfamily. Active as a homodimer. Autoproteolytically processed at the N-terminus. Expected C-terminal autoprocessing not detected. The sequence shown is that of the processed Pro protein.

It catalyses the reaction Processing at the authentic HIV-1 PR recognition site and release of the mature p17 matrix and the p24 capsid protein, as a result of the cleavage of the -SQNY-|-PIVQ- cleavage site.. In terms of biological role, retroviral proteases have roles in the processing of the primary translation products and the maturation of the viral particle. Endogenous Pro proteins may have kept, lost or modified their original function during evolution. The sequence is that of Endogenous retrovirus group K member 18 Pro protein (ERVK-18) from Homo sapiens (Human).